The primary structure comprises 830 residues: Periplasmic nitrate reductase (830 aa).

A signal peptide (tat-type signal) is located at residues 1-30; that stretch reads MTTRREFIKRSAAVTAACTAGISLSGEASN. The region spanning 40 to 96 is the 4Fe-4S Mo/W bis-MGD-type domain; sequence LKWSKAPCRFCGTGCSVNVAVKDNQVVATHGDIQSEVNRGLNCVKGYFLSKIMYGKD. 4 residues coordinate [4Fe-4S] cluster: Cys47, Cys50, Cys54, and Cys82. Residues Lys84, Gln151, Asn176, Cys180, 213 to 220, 244 to 248, Met374, Gln378, Asn484, 510 to 511, Lys533, Asp560, and 720 to 729 contribute to the Mo-bis(molybdopterin guanine dinucleotide) site; these read WGSNMAEM, STFQH, SE, and TGRVLEHWHS. Trp796 is a substrate binding site. The Mo-bis(molybdopterin guanine dinucleotide) site is built by Asn804 and Lys821.

Belongs to the prokaryotic molybdopterin-containing oxidoreductase family. NasA/NapA/NarB subfamily. As to quaternary structure, component of the periplasmic nitrate reductase NapAB complex composed of NapA and NapB. It depends on [4Fe-4S] cluster as a cofactor. The cofactor is Mo-bis(molybdopterin guanine dinucleotide). Post-translationally, predicted to be exported by the Tat system. The position of the signal peptide cleavage has not been experimentally proven.

Its subcellular location is the periplasm. The catalysed reaction is 2 Fe(II)-[cytochrome] + nitrate + 2 H(+) = 2 Fe(III)-[cytochrome] + nitrite + H2O. Its function is as follows. Catalytic subunit of the periplasmic nitrate reductase complex NapAB. Receives electrons from NapB and catalyzes the reduction of nitrate to nitrite. The polypeptide is Periplasmic nitrate reductase (Hahella chejuensis (strain KCTC 2396)).